Consider the following 314-residue polypeptide: DNA-directed RNA polymerase subunit alpha (314 aa).

Residues 1-228 (MIEIEKPKIE…EHLNIFVGLT (228 aa)) form an alpha N-terminal domain (alpha-NTD) region. The alpha C-terminal domain (alpha-CTD) stretch occupies residues 245-314 (KEKVLEMTIE…ELGLSLRKDD (70 aa)).

The protein belongs to the RNA polymerase alpha chain family. As to quaternary structure, homodimer. The RNAP catalytic core consists of 2 alpha, 1 beta, 1 beta' and 1 omega subunit. When a sigma factor is associated with the core the holoenzyme is formed, which can initiate transcription.

It carries out the reaction RNA(n) + a ribonucleoside 5'-triphosphate = RNA(n+1) + diphosphate. Functionally, DNA-dependent RNA polymerase catalyzes the transcription of DNA into RNA using the four ribonucleoside triphosphates as substrates. In Geobacillus thermodenitrificans (strain NG80-2), this protein is DNA-directed RNA polymerase subunit alpha.